An 857-amino-acid polypeptide reads, in one-letter code: DNA mismatch repair protein MutS (857 aa).

Position 608 to 615 (608 to 615 (GPNMSGKS)) interacts with ATP.

The protein belongs to the DNA mismatch repair MutS family.

Functionally, this protein is involved in the repair of mismatches in DNA. It is possible that it carries out the mismatch recognition step. This protein has a weak ATPase activity. The sequence is that of DNA mismatch repair protein MutS from Lactobacillus gasseri (strain ATCC 33323 / DSM 20243 / BCRC 14619 / CIP 102991 / JCM 1131 / KCTC 3163 / NCIMB 11718 / NCTC 13722 / AM63).